We begin with the raw amino-acid sequence, 346 residues long: Uroporphyrinogen decarboxylase (346 aa).

Substrate-binding positions include 23–27 (RQAGR), Asp-72, Tyr-155, Ser-209, and His-322.

It belongs to the uroporphyrinogen decarboxylase family. As to quaternary structure, homodimer.

It localises to the cytoplasm. It carries out the reaction uroporphyrinogen III + 4 H(+) = coproporphyrinogen III + 4 CO2. It participates in porphyrin-containing compound metabolism; protoporphyrin-IX biosynthesis; coproporphyrinogen-III from 5-aminolevulinate: step 4/4. Its function is as follows. Catalyzes the decarboxylation of four acetate groups of uroporphyrinogen-III to yield coproporphyrinogen-III. The chain is Uroporphyrinogen decarboxylase from Anaeromyxobacter sp. (strain Fw109-5).